Consider the following 231-residue polypeptide: Ubiquinone biosynthesis protein coq-4, mitochondrial (231 aa).

Residues His133, Asp134, His137, and Glu149 each coordinate Zn(2+).

It belongs to the COQ4 family. Component of a multi-subunit COQ enzyme complex. Zn(2+) is required as a cofactor.

The protein resides in the mitochondrion inner membrane. It carries out the reaction a 4-hydroxy-3-methoxy-5-(all-trans-polyprenyl)benzoate + H(+) = a 2-methoxy-6-(all-trans-polyprenyl)phenol + CO2. The protein operates within cofactor biosynthesis; ubiquinone biosynthesis. Functionally, lyase that catalyzes the C1-decarboxylation of 4-hydroxy-3-methoxy-5-(all-trans-polyprenyl)benzoic acid into 2-methoxy-6-(all-trans-polyprenyl)phenol during ubiquinone biosynthesis. This Caenorhabditis elegans protein is Ubiquinone biosynthesis protein coq-4, mitochondrial.